Consider the following 234-residue polypeptide: Glucosamine-6-phosphate deaminase (234 aa).

D63 acts as the Proton acceptor; for enolization step in catalysis. N129 acts as the For ring-opening step in catalysis. The active-site Proton acceptor; for ring-opening step is the H131. E136 serves as the catalytic For ring-opening step.

The protein belongs to the glucosamine/galactosamine-6-phosphate isomerase family. NagB subfamily.

The enzyme catalyses alpha-D-glucosamine 6-phosphate + H2O = beta-D-fructose 6-phosphate + NH4(+). Its pathway is amino-sugar metabolism; N-acetylneuraminate degradation; D-fructose 6-phosphate from N-acetylneuraminate: step 5/5. Functionally, catalyzes the reversible isomerization-deamination of glucosamine 6-phosphate (GlcN6P) to form fructose 6-phosphate (Fru6P) and ammonium ion. The sequence is that of Glucosamine-6-phosphate deaminase from Listeria monocytogenes serovar 1/2a (strain ATCC BAA-679 / EGD-e).